The primary structure comprises 382 residues: MTAPALSPTLELACELINRPSVTPLDEGCQQLMSQRLAACGFAIEPMHIEDVENFWAIRGNEGPVLCFAGHTDVVPTGPLQAWQNPPFSARIDEQGMLHGRGAADMKGSLAAMVVAVERFTADHPDHKGQIAFLITSDEEGPAHHGTKAVVERLRERGQRLDWCIVGEPSSTSLVGDVVKNGRRGSLGGTLTVRGQQGHVAYPHLAKNPIHLAAPALAELAAEHWDDGNAFFPPTSFQISNLNAGTGATNVIPGTLEAVFNFRFSTESTVEGLQQRTAAILDKHGLDWSIDWALSGLPFLTEPGDLLDGVAKAIRSVTGRETTPSTSGGTSDGRFIATLGTQVVELGPVNATIHQVDEHILASDLDVLTDIYYQTLVNLLAC.

Residue His-71 coordinates Zn(2+). The active site involves Asp-73. Asp-105 provides a ligand contact to Zn(2+). The active-site Proton acceptor is Glu-139. Zn(2+) is bound by residues Glu-140, Glu-168, and His-354.

Belongs to the peptidase M20A family. DapE subfamily. In terms of assembly, homodimer. The cofactor is Zn(2+). It depends on Co(2+) as a cofactor.

The enzyme catalyses N-succinyl-(2S,6S)-2,6-diaminopimelate + H2O = (2S,6S)-2,6-diaminopimelate + succinate. Its pathway is amino-acid biosynthesis; L-lysine biosynthesis via DAP pathway; LL-2,6-diaminopimelate from (S)-tetrahydrodipicolinate (succinylase route): step 3/3. Catalyzes the hydrolysis of N-succinyl-L,L-diaminopimelic acid (SDAP), forming succinate and LL-2,6-diaminopimelate (DAP), an intermediate involved in the bacterial biosynthesis of lysine and meso-diaminopimelic acid, an essential component of bacterial cell walls. This is Succinyl-diaminopimelate desuccinylase from Stutzerimonas stutzeri (strain A1501) (Pseudomonas stutzeri).